The following is a 276-amino-acid chain: Ribosomal RNA small subunit methyltransferase A (276 aa).

S-adenosyl-L-methionine contacts are provided by Asn-27, Leu-29, Gly-54, Glu-75, Asp-101, and Asn-122.

It belongs to the class I-like SAM-binding methyltransferase superfamily. rRNA adenine N(6)-methyltransferase family. RsmA subfamily.

It localises to the cytoplasm. It carries out the reaction adenosine(1518)/adenosine(1519) in 16S rRNA + 4 S-adenosyl-L-methionine = N(6)-dimethyladenosine(1518)/N(6)-dimethyladenosine(1519) in 16S rRNA + 4 S-adenosyl-L-homocysteine + 4 H(+). Its function is as follows. Specifically dimethylates two adjacent adenosines (A1518 and A1519) in the loop of a conserved hairpin near the 3'-end of 16S rRNA in the 30S particle. May play a critical role in biogenesis of 30S subunits. This chain is Ribosomal RNA small subunit methyltransferase A, found in Brucella melitensis biotype 1 (strain ATCC 23456 / CCUG 17765 / NCTC 10094 / 16M).